A 253-amino-acid chain; its full sequence is Phosphate import ATP-binding protein PstB (253 aa).

The region spanning 5-248 is the ABC transporter domain; sequence IQVRDLNAYY…PSDKRTEDYI (244 aa). 37–44 provides a ligand contact to ATP; it reads GPSGCGKS.

The protein belongs to the ABC transporter superfamily. Phosphate importer (TC 3.A.1.7) family. In terms of assembly, the complex is composed of two ATP-binding proteins (PstB), two transmembrane proteins (PstC and PstA) and a solute-binding protein (PstS).

The protein localises to the cell inner membrane. It catalyses the reaction phosphate(out) + ATP + H2O = ADP + 2 phosphate(in) + H(+). Part of the ABC transporter complex PstSACB involved in phosphate import. Responsible for energy coupling to the transport system. The chain is Phosphate import ATP-binding protein PstB from Koribacter versatilis (strain Ellin345).